The following is a 447-amino-acid chain: Phosphoglucosamine mutase (447 aa).

The active-site Phosphoserine intermediate is Ser-102. 4 residues coordinate Mg(2+): Ser-102, Asp-241, Asp-243, and Asp-245. Ser-102 carries the post-translational modification Phosphoserine.

This sequence belongs to the phosphohexose mutase family. The cofactor is Mg(2+). In terms of processing, activated by phosphorylation.

It carries out the reaction alpha-D-glucosamine 1-phosphate = D-glucosamine 6-phosphate. Catalyzes the conversion of glucosamine-6-phosphate to glucosamine-1-phosphate. This is Phosphoglucosamine mutase from Pseudomonas syringae pv. syringae (strain B728a).